The following is a 372-amino-acid chain: Small ribosomal subunit protein mS77 (rPPR2) (372 aa).

A mitochondrion-targeting transit peptide spans 1 to 28 (MKSFLLSRQAIHRISLLSSKTPTFCRNF). The disordered stretch occupies residues 240–265 (DNSIRESETVDGEVEEEGFVPSDEVE). Over residues 248-257 (TVDGEVEEEG) the composition is skewed to acidic residues.

In terms of assembly, component of the mitochondrial ribosome small subunit.

Its subcellular location is the mitochondrion. Functionally, required for karyogamy during female gametophyte development, when the two polar nuclei fuse to form the diploid central cell nucleus. This chain is Small ribosomal subunit protein mS77 (rPPR2), found in Arabidopsis thaliana (Mouse-ear cress).